The sequence spans 909 residues: Protein translocase subunit SecA (909 aa).

Residues Gln-87 and 105 to 109 (GEGKT) each bind ATP. The segment at 246 to 265 (LEQQEKEDEEGKNGDGDYTI) is disordered. Residues 254–265 (EEGKNGDGDYTI) show a composition bias toward basic and acidic residues. Position 512 (Asp-512) interacts with ATP. Residues 834–858 (ESDVEAVEEQRRQADEQPKQYEHET) are compositionally biased toward basic and acidic residues. Positions 834 to 899 (ESDVEAVEEQ…NDPCPCGSGL (66 aa)) are disordered. Residues 859–875 (ASATQAPEQAPEAAPAA) show a composition bias toward low complexity. The Zn(2+) site is built by Cys-893, Cys-895, Cys-904, and His-905.

Belongs to the SecA family. In terms of assembly, monomer and homodimer. Part of the essential Sec protein translocation apparatus which comprises SecA, SecYEG and auxiliary proteins SecDF-YajC and YidC. Requires Zn(2+) as cofactor.

The protein resides in the cell inner membrane. It localises to the cytoplasm. It carries out the reaction ATP + H2O + cellular proteinSide 1 = ADP + phosphate + cellular proteinSide 2.. Part of the Sec protein translocase complex. Interacts with the SecYEG preprotein conducting channel. Has a central role in coupling the hydrolysis of ATP to the transfer of proteins into and across the cell membrane, serving both as a receptor for the preprotein-SecB complex and as an ATP-driven molecular motor driving the stepwise translocation of polypeptide chains across the membrane. This is Protein translocase subunit SecA from Pseudoalteromonas atlantica (strain T6c / ATCC BAA-1087).